A 652-amino-acid polypeptide reads, in one-letter code: MKKIINIGIVAHVDAGKTTITENLLYYSGAIKSVGRVDLGNTQTDSMELERKRGITIKSSTISFNWNNVKVNIIDTPGHVDFISEVERSLNSLDGAILVISGVEGIQSQTRILFDTLKELNIPTIIFVNKLDRIGANFNKVFEEIKKNMSNKVVRLQEVYDVGSKAVYIKKLFDTCIINDDAINVLSDLDEAFLERYIGGIEPDKEEIQEKLSLYAREGSLYPVFCGAAAIGLGIEDLLDGICSYFPFASNDCESDLSGVVFKIERTSKNEKKVYVRLFGGKISVRDKIQVPNKEIAEKVKKINRLENGGVVEAQRIEAGDIGILYGLTSFQVGDVIGISNDKIKNISIAKPALKTTISAIDKEKNPELFKALTLLAEEDPLLAFAMNDIDKEIYVNLFGEVQMEILSSMLDDLYGIKVEFSNIETIYKETPKGFGASIMHMQEDLNPFWATVGLEIEPAGRGEGLRYISNVSVGSLPKSFQNAIEEAVIKTSKQGLFGWEVTDVKVTLSCGEFFSPASTPADFRNVTPMVFMEALYKAQTVLLEPLHEFELKIPQNALSKAVWDLETMRATFDNPIVIGDEFSIKGLIPVENSKEYKMKIASYTEGRGMFVTKFYGYKEASAEFSKARKKTTYDPLNKKEYLLHKLNAIRD.

The tr-type G domain occupies 2-252 (KKIINIGIVA…CSYFPFASND (251 aa)). GTP-binding positions include 11-18 (AHVDAGKT), 75-79 (DTPGH), and 129-132 (NKLD).

This sequence belongs to the TRAFAC class translation factor GTPase superfamily. Classic translation factor GTPase family. TetM/TetO subfamily.

In terms of biological role, abolishes the inhibitory effect of tetracyclin on protein synthesis by a non-covalent modification of the ribosomes. The sequence is that of Tetracycline resistance protein TetP (tetP) from Clostridium perfringens.